Consider the following 376-residue polypeptide: Partitioning defective 6 homolog gamma (376 aa).

A PB1 domain is found at 18–98 (AVEVKSKFGA…PLLRVFIQKR (81 aa)). The segment at 127–254 (RRRAHLDIGL…VTVKPANQRN (128 aa)) is interaction with PARD3 and CDC42. The Pseudo-CRIB domain occupies 134 to 151 (IGLPRDFRPVSSIIDVDL). One can recognise a PDZ domain in the interval 158-251 (RVRLHRHGCE…NLIVTVKPAN (94 aa)). The disordered stretch occupies residues 356 to 376 (PRHSLALPPGGVEEHGPAVTL). A compositionally biased stretch (basic and acidic residues) spans 367–376 (VEEHGPAVTL).

Belongs to the PAR6 family. As to quaternary structure, interacts with PARD3. Interacts with GTP-bound forms of CDC42, RHOQ/TC10 and RAC1. Interacts with the N-terminal part of PRKCI and PRKCZ. Widely expressed, with a higher expression in fetal and adult kidney.

It localises to the cytoplasm. Its subcellular location is the cell membrane. The protein localises to the cell junction. The protein resides in the tight junction. Its function is as follows. Adapter protein involved in asymmetrical cell division and cell polarization processes. May play a role in the formation of epithelial tight junctions. The PARD6-PARD3 complex links GTP-bound Rho small GTPases to atypical protein kinase C proteins. This Homo sapiens (Human) protein is Partitioning defective 6 homolog gamma (PARD6G).